A 128-amino-acid polypeptide reads, in one-letter code: Flagellar basal body rod protein FlgB (128 aa).

This sequence belongs to the flagella basal body rod proteins family. In terms of assembly, the basal body constitutes a major portion of the flagellar organelle and consists of a number of rings mounted on a central rod. In Gram-negative bacteria, at least four rings, L, P, S and M are present, whereas Gram-positive bacteria lack the L and P rings. The rod consists of about 26 subunits of FlgG in the distal portion, and FlgB, FlgC and FlgF build up the proximal portion of the rod with about 6 subunits each. Rod assembly occurs by export via the flagellum-specific pathway of its constituent proteins and by their incorporation into the rod structure in the probable order of FlgB, FlgC, FlgF and FlgG. Another protein, FliE, also assembles onto the stable rod structure.

It localises to the bacterial flagellum basal body. Structural component of flagellum, the bacterial motility apparatus. Part of the rod structure of flagellar basal body. This Cereibacter sphaeroides (strain ATCC 17029 / ATH 2.4.9) (Rhodobacter sphaeroides) protein is Flagellar basal body rod protein FlgB.